Reading from the N-terminus, the 425-residue chain is MPAGRPGPVAQSARRPPRPLSSLWSPLLLCVLGVPRGGSGAHTAVISPQDPTLLIGSSLQATCSIHGDTPGATAEGLYWTLNGRRLPSELSRLLNTSTLALALANLNGSRQQSGDNLVCHARDGSILAGSCLYVGLPPEKPFNISCWSRNMKDLTCRWTPGAHGETFLHTNYSLKYKLRWYGQDNTCEEYHTVGPHSCHIPKDLALFTPYEIWVEATNRLGSARSDVLTLDVLDVVTTDPPPDVHVSRVGGLEDQLSVRWVSPPALKDFLFQAKYQIRYRVEDSVDWKVVDDVSNQTSCRLAGLKPGTVYFVQVRCNPFGIYGSKKAGIWSEWSHPTAASTPRSERPGPGGGVCEPRGGEPSSGPVRRELKQFLGWLKKHAYCSNLSFRLYDQWRAWMQKSHKTRNQDEGILPSGRRGAARGPAG.

The N-terminal stretch at 1–33 is a signal peptide; the sequence is MPAGRPGPVAQSARRPPRPLSSLWSPLLLCVLG. The region spanning 35–134 is the Ig-like C2-type domain; sequence PRGGSGAHTA…SILAGSCLYV (100 aa). 3 N-linked (GlcNAc...) asparagine glycosylation sites follow: Asn95, Asn107, and Asn143. Fibronectin type-III domains are found at residues 140-235 and 240-344; these read KPFN…VLDV and PPPD…TPRS. A disulfide bridge links Cys146 with Cys156. Asn171 is a glycosylation site (N-linked (GlcNAc...) asparagine). Cys187 and Cys198 are oxidised to a cystine. Ser222 is subject to Phosphoserine. N-linked (GlcNAc...) asparagine glycosylation occurs at Asn295. Residues 330-334 carry the WSXWS motif motif; it reads WSEWS. The disordered stretch occupies residues 335–366; the sequence is HPTAASTPRSERPGPGGGVCEPRGGEPSSGPV. Asn385 is a glycosylation site (N-linked (GlcNAc...) asparagine). A disordered region spans residues 402–425; sequence HKTRNQDEGILPSGRRGAARGPAG. Positions 415–425 are enriched in low complexity; that stretch reads GRRGAARGPAG.

Belongs to the type I cytokine receptor family. Type 3 subfamily. Forms covalent di- and tetramers. Forms a heteromeric complex with cardiotrophin-like cytokine CLCF1/CLC; the CRLF1-CLCF1 complex is a ligand for the ciliary neurotrophic factor receptor/CNTFR. The CRLF1-CLCF1 heterodimer, as well as tripartite signaling complex formed by CRLF1, CLCF1 and CNTFR bind SORL1 (via N-terminal ectodomain); within this complex, the interaction is mediated predominantly by the CRLF1 moiety. Widely expressed in the embryo. Not detected in the brain of adult mice.

It is found in the secreted. Its function is as follows. In complex with CLCF1, forms a heterodimeric neurotropic cytokine that plays a crucial role during neuronal development. Plays a role in the initiation and/or maintenance of suckling in neonatal mice. May also play a regulatory role in the immune system. This chain is Cytokine receptor-like factor 1 (Crlf1), found in Mus musculus (Mouse).